The sequence spans 384 residues: GTPase Obg (384 aa).

The Obg domain occupies 1–159; the sequence is MKFIDEAKIE…RSLQLELKVL (159 aa). Residues 20-46 are disordered; sequence ATSFRREKFVPRGGPDGGDGGKGGSVW. Over residues 33–43 the composition is skewed to gly residues; the sequence is GPDGGDGGKGG. The OBG-type G domain occupies 160–348; it reads ADVGLLGMPN…LVHQINQYLT (189 aa). GTP-binding positions include 166-173, 191-195, 213-216, 284-287, and 329-331; these read GMPNAGKS, FTTLH, DIPG, NKLD, and SAL. 2 residues coordinate Mg(2+): serine 173 and threonine 193.

It belongs to the TRAFAC class OBG-HflX-like GTPase superfamily. OBG GTPase family. Monomer. Requires Mg(2+) as cofactor.

Its subcellular location is the cytoplasm. An essential GTPase which binds GTP, GDP and possibly (p)ppGpp with moderate affinity, with high nucleotide exchange rates and a fairly low GTP hydrolysis rate. Plays a role in control of the cell cycle, stress response, ribosome biogenesis and in those bacteria that undergo differentiation, in morphogenesis control. This Neisseria meningitidis serogroup B (strain ATCC BAA-335 / MC58) protein is GTPase Obg.